A 116-amino-acid chain; its full sequence is Ribosome-binding factor A (116 aa).

Belongs to the RbfA family. As to quaternary structure, monomer. Binds 30S ribosomal subunits, but not 50S ribosomal subunits or 70S ribosomes.

It is found in the cytoplasm. Its function is as follows. One of several proteins that assist in the late maturation steps of the functional core of the 30S ribosomal subunit. Associates with free 30S ribosomal subunits (but not with 30S subunits that are part of 70S ribosomes or polysomes). Required for efficient processing of 16S rRNA. May interact with the 5'-terminal helix region of 16S rRNA. This chain is Ribosome-binding factor A, found in Streptococcus uberis (strain ATCC BAA-854 / 0140J).